Here is a 208-residue protein sequence, read N- to C-terminus: Type 4 adapter protein LvgA (208 aa).

The interval 184–208 (GYGYPPESPRENYKHPVSSATTARK) is disordered.

The T4BSS is a complex nanomachine composed of several subcomplexes. This subunit is part of the Type IV Coupling Complex (T4CC), a subcomplex composed of the DotLMNYZ core and the IcmSW-LvgA adapter subunits, linked by the C-terminal tail of DotL.

It is found in the cytoplasm. In terms of biological role, component of the Dot/Icm type IVB secretion system (T4BSS), which is used to inject bacterial effector proteins into eukaryotic host cells. Part of a subcomplex which recruits effector proteins and delivers them to the core transmembrane subcomplex. Is a critical subunit for binding a subset of effector proteins. Recognizes more than one type of binding motif. May be a critical factor that confers host specificity. Necessary for full virulence of the bacterium in guinea pigs and presumably humans. This Legionella pneumophila protein is Type 4 adapter protein LvgA.